A 177-amino-acid polypeptide reads, in one-letter code: ATP synthase subunit delta 1 (177 aa).

This sequence belongs to the ATPase delta chain family. F-type ATPases have 2 components, F(1) - the catalytic core - and F(0) - the membrane proton channel. F(1) has five subunits: alpha(3), beta(3), gamma(1), delta(1), epsilon(1). F(0) has three main subunits: a(1), b(2) and c(10-14). The alpha and beta chains form an alternating ring which encloses part of the gamma chain. F(1) is attached to F(0) by a central stalk formed by the gamma and epsilon chains, while a peripheral stalk is formed by the delta and b chains.

The protein localises to the cell inner membrane. F(1)F(0) ATP synthase produces ATP from ADP in the presence of a proton or sodium gradient. F-type ATPases consist of two structural domains, F(1) containing the extramembraneous catalytic core and F(0) containing the membrane proton channel, linked together by a central stalk and a peripheral stalk. During catalysis, ATP synthesis in the catalytic domain of F(1) is coupled via a rotary mechanism of the central stalk subunits to proton translocation. Functionally, this protein is part of the stalk that links CF(0) to CF(1). It either transmits conformational changes from CF(0) to CF(1) or is implicated in proton conduction. In Photobacterium profundum (strain SS9), this protein is ATP synthase subunit delta 1.